The chain runs to 151 residues: MKSNRDSYWMKIALKYAYYAEENGEVPIGAILVFQEKIIGTGWNSVISQNDSTAHAEIIALREAGRNIKNYRLVNTTLYVTLQPCMMCCGAIINSRIKRLVFGASYKDLKKNPFLKKIFINLEKNKLKIKKHIMRNECAKILSNFFKNKRF.

One can recognise a CMP/dCMP-type deaminase domain in the interval 4–122 (NRDSYWMKIA…PFLKKIFINL (119 aa)). H55 is a binding site for Zn(2+). The active-site Proton donor is E57. Zn(2+) contacts are provided by C85 and C88.

It belongs to the cytidine and deoxycytidylate deaminase family. As to quaternary structure, homodimer. Zn(2+) is required as a cofactor.

The enzyme catalyses adenosine(34) in tRNA + H2O + H(+) = inosine(34) in tRNA + NH4(+). In terms of biological role, catalyzes the deamination of adenosine to inosine at the wobble position 34 of tRNA(Arg2). The sequence is that of tRNA-specific adenosine deaminase from Buchnera aphidicola subsp. Schizaphis graminum (strain Sg).